The sequence spans 267 residues: WWNFGSLLGICLMTQILTGLLLAAHYTADTTLAFSSVAHTCRDVQYGWLIRNLHANGASFFFICIYLHIGRGLYYGSYLYKETWNTGVILLLTLMATAFVGYVLPWGQMSFWGATVITNLFSAIPYIGQTIVEWAWGGFSVDNPTLTRFFTLHFLLPFMIAGLTIIHLTFLHESGSNNPLGISSNCDKIPFHPYFSLKDILGFTLMFLPLMTLALFAPNLLGDPENFTPANPLVTPPHIKPEWYFLFAYAILRSIPNKLGGVLALAA.

Helical transmembrane passes span 4-24 (FGSL…LLAA), 48-69 (WLIR…YLHI), 84-104 (WNTG…GYVL), and 149-169 (FFTL…IHLT). 2 residues coordinate heme b: His54 and His68. Residues His153 and His167 each coordinate heme b. His172 serves as a coordination point for a ubiquinone. 2 helical membrane passes run 197–217 (LKDI…ALFA) and 259–267 (LGGVLALAA).

The protein belongs to the cytochrome b family. The cytochrome bc1 complex contains 11 subunits: 3 respiratory subunits (MT-CYB, CYC1 and UQCRFS1), 2 core proteins (UQCRC1 and UQCRC2) and 6 low-molecular weight proteins (UQCRH/QCR6, UQCRB/QCR7, UQCRQ/QCR8, UQCR10/QCR9, UQCR11/QCR10 and a cleavage product of UQCRFS1). This cytochrome bc1 complex then forms a dimer. Heme b serves as cofactor.

It is found in the mitochondrion inner membrane. Component of the ubiquinol-cytochrome c reductase complex (complex III or cytochrome b-c1 complex) that is part of the mitochondrial respiratory chain. The b-c1 complex mediates electron transfer from ubiquinol to cytochrome c. Contributes to the generation of a proton gradient across the mitochondrial membrane that is then used for ATP synthesis. This Raphus cucullatus (Dodo) protein is Cytochrome b (MT-CYB).